A 284-amino-acid polypeptide reads, in one-letter code: Four and a half LIM domains protein 5 (284 aa).

A C4-type zinc finger spans residues Cys-8–Cys-32. LIM zinc-binding domains follow at residues Asn-39–Ser-100, Lys-101–Ala-160, His-161–Asn-220, and Val-223–Asp-283.

In terms of assembly, interacts with CREM (via the third LIM domain). Interacts (via second LIM domain) with SPAG8. Testis-specific (at protein level).

It localises to the nucleus. Functionally, may be involved in the regulation of spermatogenesis. Stimulates CREM transcriptional activity in a phosphorylation-independent manner. This is Four and a half LIM domains protein 5 (FHL5) from Homo sapiens (Human).